The primary structure comprises 445 residues: StAR-related lipid transfer protein 3 (445 aa).

Topologically, residues 1–51 (MSKLPGELARDLECSLPAVASLGSSLSHSQSLSSHLLPPPEKRRAISDVRR) are cytoplasmic. The 172-residue stretch at 46-217 (ISDVRRTFCL…YSPPESFAGS (172 aa)) folds into the MENTAL domain. The chain crosses the membrane as a helical span at residues 52-72 (TFCLFVTFDLLFISLLWIIEL). Topologically, residues 73–94 (NTNTGIRKNLEQEIIQYNFKTS) are extracellular. Residues 95–115 (FFDIFVLAFFRFSGLLLGYAV) form a helical membrane-spanning segment. Over 116–120 (LRLQH) the chain is Cytoplasmic. A helical membrane pass occupies residues 121-141 (WWVIAVTTLVSSAFLIVKVIL). Residues 142-148 (SELLSKG) are Extracellular-facing. The helical transmembrane segment at 149 to 169 (AFGYLLPIVSFVLAWLETWFL) threads the bilayer. Residues 170–445 (DFKVLPQEAE…QRISELGARA (276 aa)) lie on the Cytoplasmic side of the membrane. Short sequence motifs (FFAT) lie at residues 206–212 (QFYSPPE) and 207–212 (FYSPPE). Phosphoserine occurs at positions 209, 217, and 221. One can recognise an START domain in the interval 248–443 (VVDQILAQEE…LRQRISELGA (196 aa)).

It belongs to the STARD3 family. As to quaternary structure, homodimer. Interacts (via the MENTAL domain) with STARD3NL. Interacts (via phosphorylated FFAT motif) with VAPA (via MSP domain). Interacts (via phosphorylated FFAT motif) with VAPB (via MSP domain). Interacts (via phosphorylated FFAT motif) with MOSPD2 (via MSP domain); this interaction allows enrichment of MOSPD2 around endosomes. Phosphorylation at Ser-209 is necessary and sufficient for the direct interaction of the phosphorylated FFAT motif with the MSP domain of MOSPD2, VAPA and VAPB and allows the tethering of two membranes that participates in the formation of ER-endosome contacts. Phosphorylation of the FFAT motif leads to conformation changes. Additional phosphorylations around the core FFAT motif (QFYSPPE) are not essential but strengthen the interaction with MOSPD2, VAPA and VAPB. Phosphorylation at Ser-209 of FFAT motif drives membrane tethering between the endoplasmic reticulum and late endosomes via interaction with VAPA and VAPB that in turn allows the efficient transport of sterol mediated by the START domain. Present in retina. Localizes to all neurons of macular retina and especially cone inner segments and axons (at protein level).

It is found in the late endosome membrane. It carries out the reaction cholesterol(in) = cholesterol(out). Functionally, sterol-binding protein that mediates cholesterol transport from the endoplasmic reticulum to endosomes. The sterol transport mechanism is triggered by phosphorylation of FFAT motif that leads to membrane tethering between the endoplasmic reticulum and late endosomes via interaction with VAPA and VAPB. Acts as a lipid transfer protein that redirects sterol to the endosome at the expense of the cell membrane and favors membrane formation inside endosomes. May also mediate cholesterol transport between other membranes, such as mitochondria membrane or cell membrane. However, such results need additional experimental evidences; probably mainly mediates cholesterol transport from the endoplasmic reticulum to endosomes. Does not activate transcriptional cholesterol sensing. Able to bind other lipids, such as lutein, a xanthophyll carotenoids that form the macular pigment of the retina. Able to bind other lipids, such as lutein, a xanthophyll carotenoids that form the macular pigment of the retina. The polypeptide is StAR-related lipid transfer protein 3 (Macaca mulatta (Rhesus macaque)).